Consider the following 624-residue polypeptide: MESTFHSDTLDSFPNYQENSLNTNEEQTNPLESLRDGWASSNSSSSSSLLLPDENEGNEVFGSLKGLVTQSKFGQWANKLSKSLQARRRKSESISKPRVYYSVFMAPSWVLHAEKHWEEYPHYAGYDYKDYVRLLDATKEAIAHGVFPVLISKGSSGSYFVKNKVQKNIAVFKPKDEEPYGKLNPKWTKWFHRNLFPCFFGRSCLIPNTSYLSEAAACVLDRGLGLYLVPYTSVASISSPTFNYDYFARKAFLTRNKPLPEKTGSFQQFLDGFVVASKFFAQHPWPGTRHRETREYTESVASSEDFDIFDPFLAENEIETEFWTEELRLKFRFEFEKLVLLDYLMRNTDRNLDNWMIKICYEPCDNEEYYKSINLLSTNLTPNMSANSVDPAISQTSDFWKGPHFQIGAIDNSLAFPYKHPDSWRSFPYGWLSLPRSLFTQPFTEFTRQLFLHKLTSREWWEKLSDDLRNVFNQDLDFDEKMFSRQLSLVKGQAYNIVEVLKNPLMNIYDLLELPNLYVVEDVVRIEVNEPTSANSEEAEFGLPIKRDYGSILHPSCSQTFPPYPGSQLLQATPGRSFSSNAEALLPLNYITLLSKDSSSPKMLKDVIFERLQCASSNAVFSTC.

Residues 1-31 (MESTFHSDTLDSFPNYQENSLNTNEEQTNPL) are compositionally biased toward polar residues. The tract at residues 1 to 53 (MESTFHSDTLDSFPNYQENSLNTNEEQTNPLESLRDGWASSNSSSSSSLLLPD) is disordered. The segment covering 40–51 (SSNSSSSSSLLL) has biased composition (low complexity). The PI3K/PI4K catalytic domain occupies 145–520 (GVFPVLISKG…LLELPNLYVV (376 aa)). The tract at residues 151–157 (ISKGSSG) is G-loop. Positions 346–354 (RNTDRNLDN) are catalytic loop. An activation loop region spans residues 409–429 (AIDNSLAFPYKHPDSWRSFPY).

This sequence belongs to the PI3/PI4-kinase family. Mg(2+) serves as cofactor. Requires Mn(2+) as cofactor.

It localises to the cell membrane. Its subcellular location is the vacuole membrane. The protein resides in the golgi apparatus membrane. It carries out the reaction a 1,2-diacyl-sn-glycero-3-phospho-(1D-myo-inositol) + ATP = a 1,2-diacyl-sn-glycero-3-phospho-(1D-myo-inositol 4-phosphate) + ADP + H(+). Functionally, may play a role in endocytic and/or exocytic pathways. The polypeptide is Phosphatidylinositol 4-kinase lsb6 (lsb6) (Schizosaccharomyces pombe (strain 972 / ATCC 24843) (Fission yeast)).